Reading from the N-terminus, the 645-residue chain is Acetyl-coenzyme A synthetase (645 aa).

Residues 190-193 (RGSK), threonine 308, and asparagine 332 each bind CoA. ATP-binding positions include 384 to 386 (GEP), 408 to 413 (DTWWQT), aspartate 497, and arginine 512. Serine 520 contributes to the CoA binding site. Arginine 523 lines the ATP pocket. Residues valine 534, histidine 536, and valine 539 each coordinate Mg(2+). CoA is bound at residue arginine 581. At lysine 606 the chain carries N6-acetyllysine.

It belongs to the ATP-dependent AMP-binding enzyme family. The cofactor is Mg(2+). Post-translationally, acetylated. Deacetylation by the SIR2-homolog deacetylase activates the enzyme.

It carries out the reaction acetate + ATP + CoA = acetyl-CoA + AMP + diphosphate. In terms of biological role, catalyzes the conversion of acetate into acetyl-CoA (AcCoA), an essential intermediate at the junction of anabolic and catabolic pathways. AcsA undergoes a two-step reaction. In the first half reaction, AcsA combines acetate with ATP to form acetyl-adenylate (AcAMP) intermediate. In the second half reaction, it can then transfer the acetyl group from AcAMP to the sulfhydryl group of CoA, forming the product AcCoA. The polypeptide is Acetyl-coenzyme A synthetase (Bdellovibrio bacteriovorus (strain ATCC 15356 / DSM 50701 / NCIMB 9529 / HD100)).